Here is an 883-residue protein sequence, read N- to C-terminus: Bifunctional heparan sulfate N-deacetylase/N-sulfotransferase 2 (883 aa).

At methionine 1–arginine 18 the chain is on the cytoplasmic side. Residues leucine 19–serine 39 traverse the membrane as a helical; Signal-anchor for type II membrane protein segment. At threonine 40 to glycine 883 the chain is on the lumenal side. Residues serine 41–glutamate 597 are heparan sulfate N-deacetylase 2. The interval proline 49–arginine 82 is disordered. Residues proline 65–proline 77 show a composition bias toward pro residues. N-linked (GlcNAc...) asparagine glycosylation is found at asparagine 233, asparagine 350, and asparagine 400. Positions lysine 598 to glycine 883 are heparan sulfate N-sulfotransferase 2. The active-site For sulfotransferase activity is the lysine 613. Position 613–617 (lysine 613–threonine 617) interacts with 3'-phosphoadenylyl sulfate. N-linked (GlcNAc...) asparagine glycosylation is present at asparagine 666. Serine 711 contacts 3'-phosphoadenylyl sulfate. 2 N-linked (GlcNAc...) asparagine glycosylation sites follow: asparagine 726 and asparagine 802. A disulfide bond links cysteine 817 and cysteine 827. Position 832–836 (lysine 832–tyrosine 836) interacts with 3'-phosphoadenylyl sulfate.

This sequence belongs to the sulfotransferase 1 family. NDST subfamily. In terms of assembly, monomer. Widely expressed in adult and throughout development.

It localises to the golgi apparatus membrane. The enzyme catalyses alpha-D-glucosaminyl-[heparan sulfate](n) + 3'-phosphoadenylyl sulfate = N-sulfo-alpha-D-glucosaminyl-[heparan sulfate](n) + adenosine 3',5'-bisphosphate + 2 H(+). The protein operates within glycan metabolism; heparan sulfate biosynthesis. Its pathway is glycan metabolism; heparin biosynthesis. Essential bifunctional enzyme that catalyzes both the N-deacetylation and the N-sulfation of glucosamine (GlcNAc) of the glycosaminoglycan in heparan sulfate. Modifies the GlcNAc-GlcA disaccharide repeating sugar backbone to make N-sulfated heparosan, a prerequisite substrate for later modifications in heparin biosynthesis. Plays a role in determining the extent and pattern of sulfation of heparan sulfate. Required for the exosomal release of SDCBP, CD63 and syndecan. This chain is Bifunctional heparan sulfate N-deacetylase/N-sulfotransferase 2 (Ndst2), found in Mus musculus (Mouse).